An 843-amino-acid chain; its full sequence is Probable disease resistance protein At5g47250 (843 aa).

The stretch at 28-58 (MLKENLVLLKSAFDELKAEKEDVVNRVNAGE) forms a coiled coil. An NB-ARC domain is found at 141-440 (TEQPPPPVVE…GEGFIDEKDG (300 aa)). 183–190 (GMGGVGKT) is a binding site for ATP. 5 LRR repeats span residues 510 to 531 (TVTKMSLFNNEIKNIPDDPEFP), 535 to 556 (NLVTLFLQNNRLVDIVGKFFLV), 559 to 581 (TLVVLDLSWNFQITELPKGISAL), 583 to 604 (SLRLLNLSGTSIKHLPEGLGVL), and 606 to 628 (KLIHLNLESTSNLRSVGLISELQ).

This sequence belongs to the disease resistance NB-LRR family.

Its function is as follows. Probable disease resistance protein. The chain is Probable disease resistance protein At5g47250 from Arabidopsis thaliana (Mouse-ear cress).